The sequence spans 301 residues: Cardiolipin synthase (CMP-forming) (301 aa).

The segment at 70–93 is disordered; sequence SGAGKAAPRPAAGAGAAAEAPGGQ. Residues 71–93 show a composition bias toward low complexity; sequence GAGKAAPRPAAGAGAAAEAPGGQ. A run of 5 helical transmembrane segments spans residues 109 to 129, 133 to 153, 190 to 212, 250 to 270, and 272 to 292; these read IPNM…YLII, FNIA…DGFI, IPVP…VFYV, LILV…SIYL, and ILWC…YHYG.

It belongs to the CDP-alcohol phosphatidyltransferase class-I family. A divalent metal cation serves as cofactor. As to expression, highly expressed in tissues such as heart, skeletal muscle and liver.

The protein resides in the mitochondrion inner membrane. It catalyses the reaction a CDP-1,2-diacyl-sn-glycerol + a 1,2-diacyl-sn-glycero-3-phospho-(1'-sn-glycerol) = a cardiolipin + CMP + H(+). Functionally, catalyzes the synthesis of cardiolipin (CL) (diphosphatidylglycerol) by specifically transferring a phosphatidyl group from CDP-diacylglycerol to phosphatidylglycerol (PG). CL is a key phospholipid in mitochondrial membranes and plays important roles in maintaining the functional integrity and dynamics of mitochondria under both optimal and stress conditions. The sequence is that of Cardiolipin synthase (CMP-forming) (CRLS1) from Homo sapiens (Human).